A 477-amino-acid polypeptide reads, in one-letter code: Glycogen synthase (477 aa).

Lysine 15 is a binding site for ADP-alpha-D-glucose.

It belongs to the glycosyltransferase 1 family. Bacterial/plant glycogen synthase subfamily.

The enzyme catalyses [(1-&gt;4)-alpha-D-glucosyl](n) + ADP-alpha-D-glucose = [(1-&gt;4)-alpha-D-glucosyl](n+1) + ADP + H(+). It functions in the pathway glycan biosynthesis; glycogen biosynthesis. In terms of biological role, synthesizes alpha-1,4-glucan chains using ADP-glucose. This is Glycogen synthase from Streptococcus pneumoniae (strain Hungary19A-6).